The chain runs to 390 residues: Formate-dependent phosphoribosylglycinamide formyltransferase (390 aa).

N(1)-(5-phospho-beta-D-ribosyl)glycinamide is bound by residues 18–19 and Glu-78; that span reads EL. ATP contacts are provided by residues Arg-110, Lys-151, 156-161, 191-194, and Glu-199; these read SSGKGQ and EEFL. Residues 115-305 enclose the ATP-grasp domain; it reads DLASKELNIK…EFELHLRAFL (191 aa). Positions 264 and 276 each coordinate Mg(2+). Residues Asp-283, Lys-353, and 360–361 each bind N(1)-(5-phospho-beta-D-ribosyl)glycinamide; that span reads RR.

This sequence belongs to the PurK/PurT family. As to quaternary structure, homodimer.

It catalyses the reaction N(1)-(5-phospho-beta-D-ribosyl)glycinamide + formate + ATP = N(2)-formyl-N(1)-(5-phospho-beta-D-ribosyl)glycinamide + ADP + phosphate + H(+). It participates in purine metabolism; IMP biosynthesis via de novo pathway; N(2)-formyl-N(1)-(5-phospho-D-ribosyl)glycinamide from N(1)-(5-phospho-D-ribosyl)glycinamide (formate route): step 1/1. Functionally, involved in the de novo purine biosynthesis. Catalyzes the transfer of formate to 5-phospho-ribosyl-glycinamide (GAR), producing 5-phospho-ribosyl-N-formylglycinamide (FGAR). Formate is provided by PurU via hydrolysis of 10-formyl-tetrahydrofolate. The polypeptide is Formate-dependent phosphoribosylglycinamide formyltransferase (Prochlorococcus marinus subsp. pastoris (strain CCMP1986 / NIES-2087 / MED4)).